The chain runs to 48 residues: Delta-stichotoxin-Hcr1e (48 aa).

3 disulfides stabilise this stretch: Cys3–Cys43, Cys5–Cys33, and Cys26–Cys44.

This sequence belongs to the sea anemone sodium channel inhibitory toxin family. Type II subfamily.

The protein resides in the secreted. The protein localises to the nematocyst. Functionally, binds to site 3 of voltage-gated sodium channels and inhibits the inactivation process. This chain is Delta-stichotoxin-Hcr1e, found in Radianthus crispa (Leathery sea anemone).